A 182-amino-acid chain; its full sequence is Ribosome maturation factor RimM (182 aa).

The 74-residue stretch at 101 to 174 folds into the PRC barrel domain; that stretch reads QDEYFIHQLY…QIVVRLLPGL (74 aa).

Belongs to the RimM family. Binds ribosomal protein uS19.

The protein localises to the cytoplasm. In terms of biological role, an accessory protein needed during the final step in the assembly of 30S ribosomal subunit, possibly for assembly of the head region. Essential for efficient processing of 16S rRNA. May be needed both before and after RbfA during the maturation of 16S rRNA. It has affinity for free ribosomal 30S subunits but not for 70S ribosomes. This is Ribosome maturation factor RimM from Roseiflexus sp. (strain RS-1).